Consider the following 772-residue polypeptide: Magnetosome formation protease MamE (772 aa).

The Cytoplasmic portion of the chain corresponds to 1 to 21 (MTMFNGDVEDGGRSNVSCGKD). A helical transmembrane segment spans residues 22-42 (LKRYLMLMGVVALVVLFGAFI). The Lumenal portion of the chain corresponds to 43 to 772 (YRQSSGGLRL…RNGQEFWIVL (730 aa)). Catalysis depends on charge relay system residues histidine 187, aspartate 220, and serine 296. Positions 374 to 397 (IAAGTPSPHVDGRQNMDCSNCHDI) match the MCR (magnetochrome) 1 motif. Residues cysteine 391, cysteine 394, histidine 395, cysteine 437, cysteine 440, histidine 441, cysteine 488, cysteine 491, and histidine 492 each coordinate heme. 2 consecutive short sequence motifs (MCR) follow at residues 420 to 443 (IPAN…CHQF) and 470 to 494 (AIRA…CHQI). Residues 445 to 558 (GGAAAGPIAF…ALTPLTQRLG (114 aa)) enclose the Cytochrome c domain. 2 PDZ domains span residues 522–626 (AINI…LRAG) and 696–765 (GATP…HRNG).

The protein in the N-terminal section; belongs to the peptidase S1C family. In terms of assembly, might interact with MamB via PDZ1. Heme is required as a cofactor. Post-translationally, the protein isolated from magnetosome membranes has a molecular weight of about 36.3 kDa, probably due to C-terminal cleavage. Subject to autocatalytic cleavage; cleavage also requires MamO; these may be the same event.

It is found in the magnetosome membrane. Functionally, acts at 2 distinct steps of magnetosome formation; required for correct localization of proteins to the magnetosome while the protease activity is required for maturation of small magnetite crystals into larger, functional ones. Probably cleaves at least itself, MamO and MamP; cleavage requires the putative transprot domain of MamO. Involved in localization of some proteins (at least MamA, MamC, MamF, MamI and MamJ) to the magnetosome. One of 7 genes (mamLQBIEMO) able to induce magnetosome membrane biogenesis; coexpression of mamLQRBIEMO in a deletion of the 17 gene mamAB operon restores magnetosome vesicle formation but not magnetite biosynthesis. The chain is Magnetosome formation protease MamE from Magnetospirillum gryphiswaldense (strain DSM 6361 / JCM 21280 / NBRC 15271 / MSR-1).